Consider the following 482-residue polypeptide: Aspartyl/glutamyl-tRNA(Asn/Gln) amidotransferase subunit B (482 aa).

This sequence belongs to the GatB/GatE family. GatB subfamily. As to quaternary structure, heterotrimer of A, B and C subunits.

The enzyme catalyses L-glutamyl-tRNA(Gln) + L-glutamine + ATP + H2O = L-glutaminyl-tRNA(Gln) + L-glutamate + ADP + phosphate + H(+). It carries out the reaction L-aspartyl-tRNA(Asn) + L-glutamine + ATP + H2O = L-asparaginyl-tRNA(Asn) + L-glutamate + ADP + phosphate + 2 H(+). Functionally, allows the formation of correctly charged Asn-tRNA(Asn) or Gln-tRNA(Gln) through the transamidation of misacylated Asp-tRNA(Asn) or Glu-tRNA(Gln) in organisms which lack either or both of asparaginyl-tRNA or glutaminyl-tRNA synthetases. The reaction takes place in the presence of glutamine and ATP through an activated phospho-Asp-tRNA(Asn) or phospho-Glu-tRNA(Gln). This Methanoregula boonei (strain DSM 21154 / JCM 14090 / 6A8) protein is Aspartyl/glutamyl-tRNA(Asn/Gln) amidotransferase subunit B.